Consider the following 133-residue polypeptide: Transcription antitermination protein NusB (133 aa).

It belongs to the NusB family.

In terms of biological role, involved in transcription antitermination. Required for transcription of ribosomal RNA (rRNA) genes. Binds specifically to the boxA antiterminator sequence of the ribosomal RNA (rrn) operons. The chain is Transcription antitermination protein NusB from Clostridium botulinum (strain Alaska E43 / Type E3).